A 96-amino-acid polypeptide reads, in one-letter code: Large ribosomal subunit protein bL28 (96 aa).

The protein belongs to the bacterial ribosomal protein bL28 family.

The polypeptide is Large ribosomal subunit protein bL28 (Leptospira biflexa serovar Patoc (strain Patoc 1 / Ames)).